Consider the following 715-residue polypeptide: DNA-directed RNA polymerase subunit beta' (715 aa).

Residues C69, C71, C87, and C90 each coordinate Zn(2+). The segment at 244 to 272 (APESQSEVIEAQGPVPQAEEEKQRDQSIQ) is disordered. Mg(2+)-binding residues include D520, D522, and D524.

Belongs to the RNA polymerase beta' chain family. RpoC1 subfamily. In terms of assembly, in plastids the minimal PEP RNA polymerase catalytic core is composed of four subunits: alpha, beta, beta', and beta''. When a (nuclear-encoded) sigma factor is associated with the core the holoenzyme is formed, which can initiate transcription. Mg(2+) is required as a cofactor. Requires Zn(2+) as cofactor.

The protein localises to the plastid. It localises to the chloroplast. The catalysed reaction is RNA(n) + a ribonucleoside 5'-triphosphate = RNA(n+1) + diphosphate. Functionally, DNA-dependent RNA polymerase catalyzes the transcription of DNA into RNA using the four ribonucleoside triphosphates as substrates. This Zygnema circumcarinatum (Green alga) protein is DNA-directed RNA polymerase subunit beta'.